Here is a 457-residue protein sequence, read N- to C-terminus: Multidrug resistance protein MdtK (457 aa).

A run of 12 helical transmembrane segments spans residues 11 to 31 (LLAL…MGFV), 53 to 73 (IWLP…PVIA), 93 to 113 (WLAG…GYII), 127 to 147 (AVGY…FQVA), 160 to 180 (GMVM…IFIY), 189 to 209 (GGVG…LAMV), 243 to 263 (LPIA…ALLV), 276 to 296 (IALN…AAVT), 314 to 334 (AART…IFTV), 350 to 370 (VVTL…SDSI), 387 to 407 (IFYI…YILA), and 418 to 438 (PAGF…MMML).

This sequence belongs to the multi antimicrobial extrusion (MATE) (TC 2.A.66.1) family. MdtK subfamily.

It localises to the cell inner membrane. Multidrug efflux pump that functions probably as a Na(+)/drug antiporter. The chain is Multidrug resistance protein MdtK from Escherichia coli O45:K1 (strain S88 / ExPEC).